The chain runs to 434 residues: Adenylosuccinate synthetase (434 aa).

Residues 14 to 20 (GDEGKGK) and 42 to 44 (GHE) contribute to the GTP site. Asp15 (proton acceptor) is an active-site residue. Positions 15 and 42 each coordinate Mg(2+). Residues 15 to 18 (DEGK), 40 to 43 (NSGH), Thr133, Arg147, Asn229, Thr244, and Arg308 contribute to the IMP site. Residue His43 is the Proton donor of the active site. 304–310 (VTTGRVR) contributes to the substrate binding site. GTP-binding positions include Arg310, 336–338 (KLD), and 422–424 (GTG).

This sequence belongs to the adenylosuccinate synthetase family. Homodimer. Mg(2+) is required as a cofactor.

The protein localises to the cytoplasm. The enzyme catalyses IMP + L-aspartate + GTP = N(6)-(1,2-dicarboxyethyl)-AMP + GDP + phosphate + 2 H(+). It participates in purine metabolism; AMP biosynthesis via de novo pathway; AMP from IMP: step 1/2. Its function is as follows. Plays an important role in the salvage pathway for purine nucleotide biosynthesis. Catalyzes the first committed step in the biosynthesis of AMP from IMP. This is Adenylosuccinate synthetase from Theileria parva (East coast fever infection agent).